The chain runs to 806 residues: Leucine--tRNA ligase (806 aa).

The 'HIGH' region motif lies at 38–48 (PYPSGEIHMGH). Residues 572-576 (KMSKS) carry the 'KMSKS' region motif. Lys575 is an ATP binding site.

This sequence belongs to the class-I aminoacyl-tRNA synthetase family.

It is found in the cytoplasm. It carries out the reaction tRNA(Leu) + L-leucine + ATP = L-leucyl-tRNA(Leu) + AMP + diphosphate. In Helicobacter pylori (strain ATCC 700392 / 26695) (Campylobacter pylori), this protein is Leucine--tRNA ligase.